We begin with the raw amino-acid sequence, 352 residues long: Cyclin-dependent kinase-like 1 (352 aa).

One can recognise a Protein kinase domain in the interval 4–287 (YEKIGKIGEG…CEQLLQHPYF (284 aa)). ATP-binding positions include 10 to 18 (IGEGSYGVV) and Lys-33. A [NKR]KIAxRE motif is present at residues 45–51 (KKIALRE). The Proton acceptor role is filled by Asp-126.

This sequence belongs to the protein kinase superfamily. CMGC Ser/Thr protein kinase family. CDC2/CDKX subfamily.

It is found in the cytoplasm. Its subcellular location is the nucleus. It catalyses the reaction L-seryl-[protein] + ATP = O-phospho-L-seryl-[protein] + ADP + H(+). The enzyme catalyses L-threonyl-[protein] + ATP = O-phospho-L-threonyl-[protein] + ADP + H(+). The protein is Cyclin-dependent kinase-like 1 of Mus musculus (Mouse).